The primary structure comprises 647 residues: Protein FAM161B (647 aa).

Disordered regions lie at residues Met-1–Leu-39, Ser-89–Asp-110, and Leu-135–Ser-167. Residues Pro-91–Glu-105 show a composition bias toward acidic residues. Residues Leu-262–Arg-292 adopt a coiled-coil conformation. A compositionally biased stretch (polar residues) spans Pro-332 to Thr-350. Disordered regions lie at residues Pro-332–Gln-352 and Lys-388–Ser-439. Positions Leu-510–Arg-546 form a coiled coil. Positions Lys-583–Ala-647 are disordered. Residues Val-590 to Arg-602 are compositionally biased toward basic and acidic residues. The span at His-637–Ala-647 shows a compositional bias: polar residues.

It belongs to the FAM161 family. Interacts with FAM161A. As to expression, ubiquitously expressed.

This Homo sapiens (Human) protein is Protein FAM161B (FAM161B).